We begin with the raw amino-acid sequence, 597 residues long: Fructan 1-exohydrolase (597 aa).

The N-terminal stretch at 1-15 (MAQAWAFLLPVLVFG) is a signal peptide. Residue aspartate 76 is part of the active site. N-linked (GlcNAc...) asparagine glycosylation is found at asparagine 169, asparagine 237, and asparagine 249. A disulfide bond links cysteine 447 and cysteine 493. An N-linked (GlcNAc...) asparagine glycan is attached at asparagine 568.

The protein belongs to the glycosyl hydrolase 32 family.

It catalyses the reaction Hydrolysis of terminal, non-reducing (2-&gt;1)-linked beta-D-fructofuranose residues in fructans.. With respect to regulation, inhibited by sucrose. Its function is as follows. Hydrolyzes inulin-type beta-(2,1)-fructans. May play a role as a beta-(2,1)-trimmer during graminan biosynthesis. The sequence is that of Fructan 1-exohydrolase from Triticum urartu (Red wild einkorn).